The chain runs to 627 residues: Probable inactive receptor kinase At3g02880 (627 aa).

The first 23 residues, 1-23 (MKYKRKLSLSVVFLFVFYLAAVT), serve as a signal peptide directing secretion. LRR repeat units lie at residues 91-112 (QLKTLSLRFNSLSGPIPSDFSN), 115-137 (LLRYLYLQGNAFSGEIPSLLFTL), 139-161 (SIIRINLGENKFSGRIPDNVNSA), 163-184 (RLVTLYLERNQLSGPIPEITLP), and 185-206 (LQQFNVSSNQLNGSIPSSLSSW). Positions 222-246 (DTCEAESPNGGDAGGPNTPPEKKDS) are disordered. The chain crosses the membrane as a helical span at residues 253-273 (AIVGIVIGCVVGLLLLLLILF). One can recognise a Protein kinase domain in the interval 345–620 (KASAEVLGKG…LIEEVSHSSG (276 aa)). Ser-347 is subject to Phosphoserine. ATP-binding positions include 351–359 (LGKGTVGSS) and Lys-373. A helical membrane pass occupies residues 389-409 (LHVLGSMSHANLVTLIAYYFS). A Phosphoserine modification is found at Ser-424. Thr-444 is subject to Phosphothreonine. Phosphoserine is present on Ser-519. Residue Thr-595 is modified to Phosphothreonine. 2 positions are modified to phosphoserine: Ser-621 and Ser-626.

The protein belongs to the protein kinase superfamily. Ser/Thr protein kinase family.

It is found in the membrane. This chain is Probable inactive receptor kinase At3g02880, found in Arabidopsis thaliana (Mouse-ear cress).